Here is a 448-residue protein sequence, read N- to C-terminus: Potassium/proton antiporter CemA (448 aa).

4 consecutive transmembrane segments (helical) span residues 224–244, 325–345, 373–393, and 408–428; these read ALASIQYIGCLLFILSIISML, IILHLLTDIISIVTLIVLFII, ILLLTDLCIGFHSPHGWEIVI, and IISCFVSTFPVILDTVFKYWI.

This sequence belongs to the CemA family.

It localises to the plastid. The protein localises to the chloroplast inner membrane. The enzyme catalyses K(+)(in) + H(+)(out) = K(+)(out) + H(+)(in). Functionally, contributes to K(+)/H(+) antiport activity by supporting proton efflux to control proton extrusion and homeostasis in chloroplasts in a light-dependent manner to modulate photosynthesis. Prevents excessive induction of non-photochemical quenching (NPQ) under continuous-light conditions. Indirectly promotes efficient inorganic carbon uptake into chloroplasts. The protein is Potassium/proton antiporter CemA of Angiopteris evecta (Mule's foot fern).